A 643-amino-acid polypeptide reads, in one-letter code: UPF0313 protein CLD_0573 (643 aa).

The region spanning alanine 295 to serine 566 is the Radical SAM core domain. Cysteine 309, cysteine 313, and cysteine 316 together coordinate [4Fe-4S] cluster. A disordered region spans residues asparagine 598–lysine 643. A compositionally biased stretch (basic residues) spans proline 600–asparagine 609. Residues alanine 610–asparagine 621 show a composition bias toward low complexity. A compositionally biased stretch (basic residues) spans lysine 630–lysine 643.

Belongs to the UPF0313 family. Requires [4Fe-4S] cluster as cofactor.

This is UPF0313 protein CLD_0573 from Clostridium botulinum (strain Okra / Type B1).